An 85-amino-acid chain; its full sequence is Small ribosomal subunit protein uS17 (85 aa).

Belongs to the universal ribosomal protein uS17 family. As to quaternary structure, part of the 30S ribosomal subunit.

Its function is as follows. One of the primary rRNA binding proteins, it binds specifically to the 5'-end of 16S ribosomal RNA. The polypeptide is Small ribosomal subunit protein uS17 (Citrifermentans bemidjiense (strain ATCC BAA-1014 / DSM 16622 / JCM 12645 / Bem) (Geobacter bemidjiensis)).